The primary structure comprises 252 residues: Large ribosomal subunit protein uL4 (252 aa).

Belongs to the universal ribosomal protein uL4 family. Part of the 50S ribosomal subunit.

Functionally, one of the primary rRNA binding proteins, this protein initially binds near the 5'-end of the 23S rRNA. It is important during the early stages of 50S assembly. It makes multiple contacts with different domains of the 23S rRNA in the assembled 50S subunit and ribosome. Forms part of the polypeptide exit tunnel. The polypeptide is Large ribosomal subunit protein uL4 (Methanococcus vannielii (strain ATCC 35089 / DSM 1224 / JCM 13029 / OCM 148 / SB)).